The chain runs to 22 residues: XSGKVLSEEEKAAANVYIKKME.

As to quaternary structure, complex I is composed of about 45 different subunits.

The protein resides in the mitochondrion inner membrane. It catalyses the reaction a ubiquinone + NADH + 5 H(+)(in) = a ubiquinol + NAD(+) + 4 H(+)(out). Transfer of electrons from NADH to the respiratory chain. The immediate electron acceptor for the enzyme is believed to be ubiquinone. This chain is NADH-ubiquinone oxidoreductase 16 kDa subunit, found in Solanum tuberosum (Potato).